We begin with the raw amino-acid sequence, 95 residues long: 6 kDa early secretory antigenic target homolog (95 aa).

The protein belongs to the WXG100 family. ESAT-6 subfamily. In terms of assembly, forms a tight 1:1 complex with EsxB.

The protein resides in the secreted. In terms of biological role, a secreted protein that might play a role in virulence. The sequence is that of 6 kDa early secretory antigenic target homolog (esxA) from Mycobacterium leprae (strain TN).